The sequence spans 498 residues: Trehalose-6-phosphate synthase (498 aa).

R28 contacts D-glucose 6-phosphate. Residue 48–49 participates in UDP-alpha-D-glucose binding; sequence GG. Residues Y106 and D160 each coordinate D-glucose 6-phosphate. The UDP-alpha-D-glucose site is built by R302 and K307. Residue R340 participates in D-glucose 6-phosphate binding. Position 405 to 409 (405 to 409) interacts with UDP-alpha-D-glucose; the sequence is LVAKE.

Belongs to the glycosyltransferase 20 family. In terms of assembly, homotetramer.

It carries out the reaction ADP-alpha-D-glucose + D-glucose 6-phosphate = alpha,alpha-trehalose 6-phosphate + ADP + H(+). It catalyses the reaction CDP-alpha-D-glucose + D-glucose 6-phosphate = alpha,alpha-trehalose 6-phosphate + CDP + H(+). The catalysed reaction is GDP-alpha-D-glucose + D-glucose 6-phosphate = alpha,alpha-trehalose 6-phosphate + GDP + H(+). The enzyme catalyses TDP-alpha-D-glucose + D-glucose 6-phosphate = 5-methyl-UDP + alpha,alpha-trehalose 6-phosphate + H(+). It carries out the reaction D-glucose 6-phosphate + UDP-alpha-D-glucose = alpha,alpha-trehalose 6-phosphate + UDP + H(+). It functions in the pathway glycan biosynthesis; trehalose biosynthesis. Probably involved in the osmoprotection via the biosynthesis of trehalose and in the production of glycogen and alpha-glucan via the TreS-Pep2 branch involved in the biosynthesis of maltose-1-phosphate (M1P). Catalyzes the transfer of glucose from UDP-glucose (UDP-Glc) to D-glucose 6-phosphate (Glc-6-P) to form trehalose-6-phosphate. Probably also able to use ADP-Glc, CDP-Glc, GDP-Glc and TDP-Glc as glucosyl donors. The polypeptide is Trehalose-6-phosphate synthase (Mycobacterium leprae (strain TN)).